A 1311-amino-acid polypeptide reads, in one-letter code: MDLFDFFRDWDLEQQCHYEQDRSALKKREWERRNQEVQQEDDLFSSGFDLFGEPYKVAEYTNKGDALANRVQNTLGNYDEMKNLLTNHSNQNHLVGIPKNSVPQNPNNKNEPSFFPEQKNRIIPPHQDNTHPSAPMPPPSVVILNSTLIHSNRKSKPEWSRDSHNPSTVLASQASGQPNKMQTLTQDQSQAKLEDFFVYPAEQPQIGEVEESNPSAKEDSNPNSSGEDAFKEIFQSNSPEESEFAVQAPGSPLVASSLLAPSSGLSVQNFPPGLYCKTSMGQQKPTAYVRPMDGQDQAPDISPTLKPSIEFENSFGNLSFGTLLDGKPSAASSKTKLPKFTILQTSEVSLPSDPSCVEEILREMTHSWPTPLTSMHTAGHSEQSTFSIPGQESQHLTPGFTLQKWNDPTTRASTKSVSFKSMLEDDLKLSSDEDDLEPVKTLTTQCTATELYQAVEKAKPRNNPVNPPLATPQPPPAVQASGGSGSSSESESSSESDSDTESSTTDSESNEAPRVATPEPEPPSTNKWQLDKWLNKVTSQNKSFICGQNETPMETISLPPPIIQPMEVQMKVKTNASQVPAEPKERPLLSLIREKARPRPTQKIPETKALKHKLSTTSETVSQRTIGKKQPKKVEKNTSTDEFTWPKPNITSSTPKEKESVELHDPPRGRNKATAHKPAPRKEPRPNIPLAPEKKKYRGPGKIVPKSREFIETDSSTSDSNTDQEETLQIKVLPPCIISGGNTAKSKEICGASLTLSTLMSSSGSNNNLSISNEEPTFSPIPVMQTEILSPLRDHENLKNLWVKIDLDLLSRVPGHSSLHAAPAKPDHKETATKPKRQTAVTAVEKPAPKGKRKHKPIEVAEKIPEKKQRLEEATTICLLPPCISPAPPHKPPNTRENNSSRRANRRKEEKLFPPPLSPLPEDPPRRRNVSGNNGPFGQDKNIAMTGQITSTKPKRTEGKFCATFKGISVNEGDTPKKASSATITVTNTAIATATVTATAIVTTTVTATATATATTTTTTTTISTITSTITTGLMDSSHLEMTSWAALPLLSSSSTNVRRPKLTFDDSVHNADYYMQEAKKLKHKADALFEKFGKAVNYADAALSFTECGNAMERDPLEAKSPYTMYSETVELLRYAMRLKNFASPLASDGDKKLAVLCYRCLSLLYLRMFKLKKDHAMKYSRSLMEYFKQNASKVAQIPSPWVSNGKNTPSPVSLNNVSPINAMGNCNNGPVTIPQRIHHMAASHVNITSNVLRGYEHWDMADKLTRENKEFFGDLDTLMGPLTQHSSMTNLVRYVRQGLCWLRIDAHLL.

Disordered regions lie at residues 94–187 (LVGI…LTQD), 204–229 (PQIGEVEESNPSAKEDSNPNSSGEDA), and 377–417 (TAGH…TKSV). Residues 101-111 (SVPQNPNNKNE) show a composition bias toward polar residues. A compositionally biased stretch (basic and acidic residues) spans 155–164 (SKPEWSRDSH). A compositionally biased stretch (polar residues) spans 165 to 187 (NPSTVLASQASGQPNKMQTLTQD). Composition is skewed to polar residues over residues 377-396 (TAGHSEQSTFSIPGQESQHL) and 403-417 (QKWNDPTTRASTKSV). S430 is modified (phosphoserine). Disordered regions lie at residues 457–530 (KAKP…KWQL), 574–726 (TNAS…DQEE), 818–867 (SLHA…IPEK), and 881–943 (PPCI…DKNI). The segment covering 465–477 (VNPPLATPQPPPA) has biased composition (pro residues). Residues 478–491 (VQASGGSGSSSESE) are compositionally biased toward low complexity. The residue at position 517 (T517) is a Phosphothreonine. Over residues 582-597 (EPKERPLLSLIREKAR) the composition is skewed to basic and acidic residues. Positions 615 to 625 (STTSETVSQRT) are enriched in polar residues. Over residues 655–668 (PKEKESVELHDPPR) the composition is skewed to basic and acidic residues. The span at 669 to 679 (GRNKATAHKPA) shows a compositional bias: basic residues. Residues 857 to 867 (PIEVAEKIPEK) are compositionally biased toward basic and acidic residues. Pro residues-rich tracts occupy residues 883 to 892 (CISPAPPHKP) and 913 to 922 (FPPPLSPLPE).

This sequence belongs to the AF4 family. In terms of tissue distribution, brain (most abundant in hippocampus and amygdala), placenta and lung.

The protein localises to the nucleus speckle. In terms of biological role, RNA-binding protein. Might be involved in alternative splicing regulation through an interaction with G-quartet RNA structure. The protein is AF4/FMR2 family member 2 of Homo sapiens (Human).